Consider the following 695-residue polypeptide: Lasso peptide isopeptidase AtxE2 (695 aa).

A signal peptide spans 1–30 (MRSSKIRCPGAIRVGTLVTAFGCLPHVAFA). Intrachain disulfides connect Cys296–Cys301 and Cys354–Cys363. The active-site Nucleophile is Ser527. A disulfide bridge links Cys551 with Cys552. Active-site charge relay system residues include Glu610 and His638.

It localises to the cytoplasm. In terms of biological role, lasso peptide isopeptidase that specifically hydrolyzes Astexin-2 and Astexin-3, converting them to linear peptides. Has only a few specific contacts with substrates, because it recognizes Astexin knotted structure (principally the loop structure). Its binding to lasso peptides opens them to expose the isopeptide bonds for hydrolysis. The sequence is that of Lasso peptide isopeptidase AtxE2 from Asticcacaulis excentricus (strain ATCC 15261 / DSM 4724 / KCTC 12464 / NCIMB 9791 / VKM B-1370 / CB 48).